The sequence spans 446 residues: Protein odr-4 homolog (446 aa).

2 consecutive transmembrane segments (helical) span residues 81–101 and 424–444; these read MLPG…ELSK and MGVV…FNYF.

The protein belongs to the ODR-4 family.

The protein resides in the membrane. Its function is as follows. May play a role in the trafficking of a subset of G-protein coupled receptors. This is Protein odr-4 homolog (ODR4) from Gallus gallus (Chicken).